A 510-amino-acid polypeptide reads, in one-letter code: ETS translocation variant 5 (510 aa).

Residues 132–245 are disordered; it reads KPLTPPATPL…PGDSRPSYHR (114 aa). Residues 163 to 174 are compositionally biased toward low complexity; it reads TPGAGPVQGVGP. Over residues 211–224 the composition is skewed to polar residues; the sequence is QYPSEQRFQRQLSE. A Phosphoserine modification is found at serine 248. Lysine 350 participates in a covalent cross-link: Glycyl lysine isopeptide (Lys-Gly) (interchain with G-Cter in SUMO2). The ETS DNA-binding region spans 368 to 448; that stretch reads LQLWQFLVTL…AGERYVYKFV (81 aa).

This sequence belongs to the ETS family. As to quaternary structure, interacts (via C-terminal) with ZMYM5 (via N-terminal 120 amino acid region). As to expression, in the brain, expressed predominantly in the cerebral cortex, the amygdala and the hypothalamus. Within the cerebral cortex, there is conspicuously high expression in cortical layers 2, 4 and 6 while expression is almost absent from layers 1, 3 and 5. High expression is also observed in the dorsal and ventral endopiriform claustrum. Strong expression is observed in limited parts of the amygdala including the basolateral amygdaloid nucleus, the bed stria terminalis and the central amygdaloid nucleus. Low to moderate levels are found in the hypothalamus while expression is almost absent in the thalamus. Hypothalamic expression is seen in the dorsomedial hypothalamic nucleus and also the central, dorsomedial and ventrolateral parts of the ventromedial hypothalamic nucleus. Strong expression is also identified in the nigrostriatal tract. In the mesencephalon, expression is restricted to the ventral tegmental area including the parabrachial pigmented nucleus. In the hippocampus, strongly expressed in the pyramidal cell layer. Some expression is also found in the lacunosum moleculare layer. Low levels of expression in the cerebellum, including the granular, molecular and Purkinje cell layers.

The protein localises to the nucleus. Its function is as follows. Binds to DNA sequences containing the consensus nucleotide core sequence 5'-GGAA.-3'. This Mus musculus (Mouse) protein is ETS translocation variant 5 (Etv5).